The sequence spans 297 residues: Probable endonuclease 4 (297 aa).

Zn(2+) is bound by residues H68, H109, E144, D178, H181, H213, D226, H228, and E258.

This sequence belongs to the AP endonuclease 2 family. The cofactor is Zn(2+).

It carries out the reaction Endonucleolytic cleavage to 5'-phosphooligonucleotide end-products.. Its function is as follows. Endonuclease IV plays a role in DNA repair. It cleaves phosphodiester bonds at apurinic or apyrimidinic (AP) sites, generating a 3'-hydroxyl group and a 5'-terminal sugar phosphate. The sequence is that of Probable endonuclease 4 from Enterococcus faecalis (strain ATCC 700802 / V583).